A 126-amino-acid chain; its full sequence is Large-conductance mechanosensitive channel (126 aa).

Transmembrane regions (helical) follow at residues 14–34 and 66–86; these read VIDL…VNSL and FITT…LVVV.

Belongs to the MscL family. Homopentamer.

It is found in the cell membrane. Its function is as follows. Channel that opens in response to stretch forces in the membrane lipid bilayer. May participate in the regulation of osmotic pressure changes within the cell. In Roseiflexus sp. (strain RS-1), this protein is Large-conductance mechanosensitive channel.